A 557-amino-acid polypeptide reads, in one-letter code: Mercuric reductase (557 aa).

Residues 1 to 65 form the HMA domain; sequence MILLSIEGMT…AIEALGYIAK (65 aa). Positions 11 and 14 each coordinate a metal cation. Positions 106 and 126 each coordinate FAD. Residues cysteine 133 and cysteine 138 are joined by a disulfide bond. 4 residues coordinate FAD: lysine 142, alanine 207, aspartate 399, and valine 407. Residues cysteine 554 and cysteine 555 each coordinate Hg(2+).

The protein belongs to the class-I pyridine nucleotide-disulfide oxidoreductase family. In terms of assembly, homodimer. Requires FAD as cofactor.

It carries out the reaction Hg + NADP(+) + H(+) = Hg(2+) + NADPH. Its function is as follows. Resistance to Hg(2+) in bacteria appears to be governed by a specialized system which includes mercuric reductase. MerA protein is responsible for volatilizing mercury as Hg(0). This chain is Mercuric reductase (merA), found in Shewanella putrefaciens (Pseudomonas putrefaciens).